The primary structure comprises 299 residues: Sulfotransferase 1B1 (299 aa).

48-53 contributes to the 3'-phosphoadenylyl sulfate binding site; the sequence is KSGTTW. 107-109 contributes to the substrate binding site; that stretch reads KTH. The active-site Proton acceptor is the histidine 109. Residues arginine 131, serine 139, tyrosine 194, 228–233, and 258–260 contribute to the 3'-phosphoadenylyl sulfate site; these read TSFEMM and RKG.

This sequence belongs to the sulfotransferase 1 family. As to expression, liver specific.

It localises to the cytoplasm. The enzyme catalyses a phenol + 3'-phosphoadenylyl sulfate = an aryl sulfate + adenosine 3',5'-bisphosphate + H(+). It carries out the reaction 3,3',5-triiodo-L-thyronine + 3'-phosphoadenylyl sulfate = 3,3',5-triiodo-L-thyronine sulfate + adenosine 3',5'-bisphosphate + H(+). It catalyses the reaction 3,3',5'-triiodo-L-thyronine + 3'-phosphoadenylyl sulfate = 3,3',5'-triiodo-L-thyronine sulfate + adenosine 3',5'-bisphosphate + H(+). The catalysed reaction is 3,3'-diiodo-L-thyronine + 3'-phosphoadenylyl sulfate = 3,3'-diiodo-L-thyronine sulfate + adenosine 3',5'-bisphosphate + H(+). The enzyme catalyses dopamine + 3'-phosphoadenylyl sulfate = dopamine 3-O-sulfate + adenosine 3',5'-bisphosphate + H(+). It carries out the reaction dopamine + 3'-phosphoadenylyl sulfate = dopamine 4-O-sulfate + adenosine 3',5'-bisphosphate + H(+). It catalyses the reaction 4-ethylphenol + 3'-phosphoadenylyl sulfate = 4-ethylphenyl sulfate + adenosine 3',5'-bisphosphate + H(+). Functionally, sulfotransferase that utilizes 3'-phospho-5'-adenylyl sulfate (PAPS) as sulfonate donor to catalyze the sulfate conjugation of dopamine, small phenols such as 1-naphthol and p-nitrophenol and thyroid hormones, including 3,3'-diiodothyronine, triidothyronine (T3) and reverse triiodothyronine (rT3). May play a role in gut microbiota-host metabolic interaction. O-sulfonates 4-ethylphenol (4-EP), a dietary tyrosine-derived metabolite produced by gut bacteria. The product 4-EPS crosses the blood-brain barrier and may negatively regulate oligodendrocyte maturation and myelination, affecting the functional connectivity of different brain regions associated with the limbic system. In Mus musculus (Mouse), this protein is Sulfotransferase 1B1.